The primary structure comprises 374 residues: Alanine racemase (374 aa).

K44 (proton acceptor; specific for D-alanine) is an active-site residue. At K44 the chain carries N6-(pyridoxal phosphate)lysine. Substrate is bound at residue R139. Residue Y269 is the Proton acceptor; specific for L-alanine of the active site. Position 317 (M317) interacts with substrate.

It belongs to the alanine racemase family. The cofactor is pyridoxal 5'-phosphate.

It catalyses the reaction L-alanine = D-alanine. It participates in amino-acid biosynthesis; D-alanine biosynthesis; D-alanine from L-alanine: step 1/1. Its function is as follows. Catalyzes the interconversion of L-alanine and D-alanine. May also act on other amino acids. The protein is Alanine racemase (alr) of Bordetella avium (strain 197N).